An 88-amino-acid chain; its full sequence is MVKLRLKRCGRKQRAVYRIVAIDGRSRREGRDLRKVGFYDPINNQTHLNVPAILYFLAKGAQPTGTVHDISQKAGVFTEVSLNQTKFY.

This sequence belongs to the bacterial ribosomal protein bS16 family.

It localises to the plastid. Its subcellular location is the chloroplast. The sequence is that of Small ribosomal subunit protein bS16c from Citrus sinensis (Sweet orange).